The primary structure comprises 329 residues: L-carnitine dehydrogenase (329 aa).

Glycine 19–glycine 24 contributes to the NAD(+) binding site.

Belongs to the 3-hydroxyacyl-CoA dehydrogenase family. L-carnitine dehydrogenase subfamily. In terms of assembly, homodimer.

Its subcellular location is the cytoplasm. It catalyses the reaction carnitine + NAD(+) = 3-dehydrocarnitine + NADH + H(+). The protein operates within amine and polyamine metabolism; carnitine metabolism. Catalyzes the NAD(+)-dependent oxidation of L-carnitine to 3-dehydrocarnitine. The protein is L-carnitine dehydrogenase of Nocardiopsis dassonvillei (strain ATCC 23218 / DSM 43111 / CIP 107115 / JCM 7437 / KCTC 9190 / NBRC 14626 / NCTC 10488 / NRRL B-5397 / IMRU 509) (Actinomadura dassonvillei).